The chain runs to 131 residues: Large ribosomal subunit protein bL17 (131 aa).

It belongs to the bacterial ribosomal protein bL17 family. As to quaternary structure, part of the 50S ribosomal subunit. Contacts protein L32.

The polypeptide is Large ribosomal subunit protein bL17 (Burkholderia mallei (strain NCTC 10229)).